Reading from the N-terminus, the 671-residue chain is Receptor-interacting serine/threonine-protein kinase 1 (671 aa).

A Phosphoserine; by IKKA and IKKB modification is found at S6. Positions 17–289 (FLESAELDSG…GIEEKFRPFY (273 aa)) constitute a Protein kinase domain. S20 bears the Phosphoserine; by autocatalysis mark. ATP contacts are provided by residues 23–31 (LDSGGFGKV) and K45. Phosphoserine; by IKKA and IKKB is present on S25. The Proton acceptor role is filled by D138. Residue S161 is modified to Phosphoserine; by RIPK3 and autocatalysis. Residue S166 is modified to Phosphoserine; by autocatalysis. An interaction with SQSTM1 region spans residues 290–582 (LSQLEESVEE…QAIFDNTTSL (293 aa)). Position 303 is a phosphoserine (S303). Residues S320, S331, and S333 each carry the phosphoserine; by MAP3K7 modification. Positions 331–348 (SRSNSATEQPGSLHSSQG) are enriched in polar residues. Residues 331–354 (SRSNSATEQPGSLHSSQGLGMGPV) are disordered. K377 participates in a covalent cross-link: Glycyl lysine isopeptide (Lys-Gly) (interchain with G-Cter in ubiquitin). Y384 is modified (phosphotyrosine). Residues 389-455 (SRMDRQTKQQ…GNAVHQPSGL (67 aa)) are disordered. Residues 428-444 (NFQNTEGKGTAYSSAAS) are compositionally biased toward polar residues. The RIP homotypic interaction motif (RHIM) motif lies at 531-547 (YTIYNSTGIQIGAYNYM). The Death domain maps to 583 to 669 (TDKHLDPIRE…DLLSSLIYVS (87 aa)). R603 carries a (Microbial infection) N-beta-linked (GlcNAc) arginine glycan.

It belongs to the protein kinase superfamily. TKL Ser/Thr protein kinase family. As to quaternary structure, homodimer. Interacts (via RIP homotypic interaction motif) with RIPK3 (via RIP homotypic interaction motif); this interaction induces RIPK1 phosphorylation and formation of a RIPK1-RIPK3 necroptosis-inducing complex. Upon TNF-induced necrosis, the RIPK1-RIPK3 dimer further interacts with PGAM5 and MLKL; the formation of this complex leads to PGAM5 phosphorylation and increase in PGAM5 phosphatase activity. Interacts (via the death domain) with TNFRSF6 (via the death domain) and TRADD (via the death domain). Is recruited by TRADD to TNFRSF1A in a TNF-dependent process. Binds RNF216, EGFR, IKBKG, TRAF1, TRAF2 and TRAF3. Interacts with BNLF1. Interacts with SQSTM1 upon TNF-alpha stimulation. May interact with MAVS/IPS1. Interacts with ZFAND5. Interacts with RBCK1. Interacts with ZBP1. Interacts with BIRC2/c-IAP1, BIRC3/c-IAP2 and XIAP/BIRC4. Interacts (via kinase domain) with DAB2IP (via Ras-GAP domain); the interaction occurs in a TNF-alpha-dependent manner. Interacts with ARHGEF2. Interacts (via protein kinase domain) with RFFL; involved in RIPK1 ubiquitination. Interacts with RNF34; involved in RIPK1 ubiquitination. Interacts with TICAM1 and this interaction is enhanced in the presence of WDFY1. Interacts with PELI1. Interacts (via death domain) with CRADD (via death domain); the interaction is direct. Component of complex IIa composed of at least RIPK1, FADD and CASP8. Component of the AIM2 PANoptosome complex, a multiprotein complex that drives inflammatory cell death (PANoptosis). Interacts with MAP3K7, CFLAR, CASP8, FADD and NEMO. Interacts with TAX1BP1; this interaction negatively regulates RIPK1 ubiquitination. Interacts with GRB2. Interacts with DDX24; this interaction disrupts RLR signaling activation of IFN-dependent transcription factor IRF7. In terms of assembly, (Microbial infection) Interacts with mumps virus protein SH; this interaction inhibits downstream NF-kappa-B pathway activation. (Microbial infection) Interacts with Murid herpesvirus 1 protein RIR1. As to quaternary structure, (Microbial infection) Interacts (via RIP homotypic interaction motif) with herpes simplex virus 1/HHV-1 protein RIR1/ICP6 (via RIP homotypic interaction motif); this interaction prevents necroptosis activation. In terms of assembly, (Microbial infection) Interacts (via RIP homotypic interaction motif) with herpes simplex virus 2/HHV-2 protein RIR1/ICP10 (via RIP homotypic interaction motif); this interaction prevents necroptosis activation. Post-translationally, (Microbial infection) Proteolytically cleaved by S.flexneri OspD3 within the RIP homotypic interaction motif (RHIM), leading to its degradation and inhibition of necroptosis. Proteolytically cleaved by CASP8 at Asp-324. Cleavage is crucial for limiting TNF-induced apoptosis, necroptosis and inflammatory response. Cleavage abolishes NF-kappa-B activation and enhances the interaction of TRADD with FADD. Proteolytically cleaved by CASP6 during intrinsic apoptosis. In terms of processing, RIPK1 and RIPK3 undergo reciprocal auto- and trans-phosphorylation. Phosphorylation of Ser-161 by RIPK3 is necessary for the formation of the necroptosis-inducing complex. Phosphorylation at Ser-25 represses its kinase activity and consequently prevents TNF-mediated RIPK1-dependent cell death. Phosphorylated at Ser-320 by MAP3K7 which requires prior ubiquitination with 'Lys-63'-linked chains by BIRC2/c-IAP1 and BIRC3/c-IAP2. This phosphorylation positively regulates RIPK1 interaction with RIPK3 to promote necroptosis but negatively regulates RIPK1 kinase activity and its interaction with FADD to mediate apoptosis. Post-translationally, deubiquitinated by USP7; this modification is required for TNF-alpha-induced apoptosis. Ubiquitinated with 'Lys-11'-, 'Lys-48'-, 'Lys-63'- and linear-linked type ubiquitin. Polyubiquitination with 'Lys-63'-linked chains by TRAF2 induces association with the IKK complex. Deubiquitination of 'Lys-63'-linked chains and polyubiquitination with 'Lys-48'-linked chains by TNFAIP3 leads to RIPK1 proteasomal degradation and consequently down-regulates TNF-alpha-induced NF-kappa-B signaling. 'Lys-48'-linked polyubiquitination by RFFL or RNF34 also promotes proteasomal degradation and negatively regulates TNF-alpha-induced NF-kappa-B signaling. Linear polyubiquitinated; the head-to-tail linear polyubiquitination ('Met-1'-linked) is mediated by the LUBAC complex and decreases protein kinase activity. Deubiquitination of linear polyubiquitin by CYLD promotes the kinase activity. Polyubiquitinated with 'Lys-48' and 'Lys-63'-linked chains by BIRC2/c-IAP1 and BIRC3/c-IAP2, leading to activation of NF-kappa-B. Ubiquitinated with 'Lys-63'-linked chains by PELI1. Ubiquitination at Lys-377 with 'Lys-63'-linked chains by BIRC2/c-IAP1 and BIRC3/c-IAP2 is essential for its phosphorylation at Ser-320 mediated by MAP3K7. This ubiquitination is required for NF-kB activation, suppresses RIPK1 kinase activity and plays a critical role in preventing cell death during embryonic development. In terms of processing, (Microbial infection) Glycosylated at Arg-603 by enteropathogenic E.coli protein NleB1: arginine GlcNAcylation prevents homotypic/heterotypic death domain interactions.

It localises to the cytoplasm. The protein resides in the cell membrane. It catalyses the reaction L-seryl-[protein] + ATP = O-phospho-L-seryl-[protein] + ADP + H(+). It carries out the reaction L-threonyl-[protein] + ATP = O-phospho-L-threonyl-[protein] + ADP + H(+). Serine-threonine kinase activity is inhibited by linear polyubiquitination ('Met-1'-linked) by the LUBAC complex. Inhibited by necrostatins, including necrostatin-1, necrostatin-3 and necrostatin-4. Functionally, serine-threonine kinase which is a key regulator of TNF-mediated apoptosis, necroptosis and inflammatory pathways. Exhibits kinase activity-dependent functions that regulate cell death and kinase-independent scaffold functions regulating inflammatory signaling and cell survival. Has kinase-independent scaffold functions: upon binding of TNF to TNFR1, RIPK1 is recruited to the TNF-R1 signaling complex (TNF-RSC also known as complex I) where it acts as a scaffold protein promoting cell survival, in part, by activating the canonical NF-kappa-B pathway. Kinase activity is essential to regulate necroptosis and apoptosis, two parallel forms of cell death: upon activation of its protein kinase activity, regulates assembly of two death-inducing complexes, namely complex IIa (RIPK1-FADD-CASP8), which drives apoptosis, and the complex IIb (RIPK1-RIPK3-MLKL), which drives necroptosis. RIPK1 is required to limit CASP8-dependent TNFR1-induced apoptosis. In normal conditions, RIPK1 acts as an inhibitor of RIPK3-dependent necroptosis, a process mediated by RIPK3 component of complex IIb, which catalyzes phosphorylation of MLKL upon induction by ZBP1. Inhibits RIPK3-mediated necroptosis via FADD-mediated recruitment of CASP8, which cleaves RIPK1 and limits TNF-induced necroptosis. Required to inhibit apoptosis and necroptosis during embryonic development: acts by preventing the interaction of TRADD with FADD thereby limiting aberrant activation of CASP8. In addition to apoptosis and necroptosis, also involved in inflammatory response by promoting transcriptional production of pro-inflammatory cytokines, such as interleukin-6 (IL6). Phosphorylates RIPK3: RIPK1 and RIPK3 undergo reciprocal auto- and trans-phosphorylation. Phosphorylates DAB2IP at 'Ser-728' in a TNF-alpha-dependent manner, and thereby activates the MAP3K5-JNK apoptotic cascade. Required for ZBP1-induced NF-kappa-B activation in response to DNA damage. The sequence is that of Receptor-interacting serine/threonine-protein kinase 1 from Homo sapiens (Human).